The primary structure comprises 244 residues: tRNA (guanine-N(1)-)-methyltransferase (244 aa).

Residues Gly-112 and 131–136 (LGDFIL) contribute to the S-adenosyl-L-methionine site. A disordered region spans residues 211-244 (IKRTSDRRPDLLEKWQQEKKPGSREQGSREQGEK).

It belongs to the RNA methyltransferase TrmD family. In terms of assembly, homodimer.

Its subcellular location is the cytoplasm. The catalysed reaction is guanosine(37) in tRNA + S-adenosyl-L-methionine = N(1)-methylguanosine(37) in tRNA + S-adenosyl-L-homocysteine + H(+). Specifically methylates guanosine-37 in various tRNAs. This is tRNA (guanine-N(1)-)-methyltransferase from Trichormus variabilis (strain ATCC 29413 / PCC 7937) (Anabaena variabilis).